The primary structure comprises 983 residues: Polyhomeotic-like protein 3 (983 aa).

Disordered stretches follow at residues 1–34 (MDTE…MQQP), 103–149 (LSSG…SSTS), 225–283 (VLSS…TAVT), 313–332 (LHSP…QQQQ), 339–410 (LQNS…SQSP), 477–509 (PGQQ…STSP), and 601–620 (DECV…PAAI). 2 stretches are compositionally biased toward low complexity: residues 9-29 (TSSV…TSSS) and 103-126 (LSSG…SQTS). The span at 127-139 (INLSTSPTPAQLI) shows a compositional bias: polar residues. Low complexity predominate over residues 140–149 (SRSQASSSTS). Polar residues predominate over residues 225-257 (VLSSSQNGPPKSTSQTQSLTICHNKTTVTSSKI). Residues 258-271 (SQRDPSPESNKKGE) show a composition bias toward basic and acidic residues. Residues Ser-263 and Ser-272 each carry the phosphoserine modification. Polar residues predominate over residues 274–283 (SLESRSTAVT). Position 315 is a phosphoserine (Ser-315). The segment covering 365–383 (SNAQSQHCSPIQSHPSPLT) has biased composition (polar residues). Over residues 384–398 (VSPNQSQSAQQSVVV) the composition is skewed to low complexity. Polar residues predominate over residues 477 to 489 (PGQQIVSPSHQQY). The segment covering 490 to 506 (SSLQSSPIPIASPPQMS) has biased composition (low complexity). Phosphothreonine occurs at positions 609 and 614. The residue at position 616 (Ser-616) is a Phosphoserine. Glycyl lysine isopeptide (Lys-Gly) (interchain with G-Cter in SUMO2) cross-links involve residues Lys-691 and Lys-732. Positions 691-720 (KPPQAIVKPQILTHVIEGFVIQEGLEPFPV) match the HD1 motif. Phosphoserine is present on residues Ser-761 and Ser-762. The FCS-type zinc finger occupies 776–810 (EEMDSELLKCEFCGKMGYANEFLRSKRFCTMSCAK). Cys-785, Cys-788, Cys-804, and Cys-808 together coordinate Zn(2+). A Glycyl lysine isopeptide (Lys-Gly) (interchain with G-Cter in SUMO2) cross-link involves residue Lys-810. Disordered stretches follow at residues 827-847 (RKPD…PDGA) and 864-889 (EEDL…SERE). The SAM domain maps to 919–983 (WTVDDVWAFI…CARINSLKES (65 aa)).

As to quaternary structure, component of a PRC1-like complex.

It localises to the nucleus. Functionally, component of a Polycomb group (PcG) multiprotein PRC1-like complex, a complex class required to maintain the transcriptionally repressive state of many genes, including Hox genes, throughout development. PcG PRC1 complex acts via chromatin remodeling and modification of histones; it mediates monoubiquitination of histone H2A 'Lys-119', rendering chromatin heritably changed in its expressibility. This chain is Polyhomeotic-like protein 3 (PHC3), found in Homo sapiens (Human).